A 356-amino-acid chain; its full sequence is NADH-quinone oxidoreductase subunit H (356 aa).

8 helical membrane-spanning segments follow: residues 18 to 38 (IVMV…IAYI), 87 to 107 (GVFL…WAVI), 120 to 140 (VGIL…IMAG), 166 to 186 (IGFV…SAIV), 202 to 222 (WLTF…VFYV), 265 to 285 (AITT…LPPI), 292 to 312 (WVPG…LFAM), and 328 to 348 (LGWK…AGVL).

Belongs to the complex I subunit 1 family. As to quaternary structure, NDH-1 is composed of 14 different subunits. Subunits NuoA, H, J, K, L, M, N constitute the membrane sector of the complex.

The protein resides in the cell inner membrane. The enzyme catalyses a quinone + NADH + 5 H(+)(in) = a quinol + NAD(+) + 4 H(+)(out). In terms of biological role, NDH-1 shuttles electrons from NADH, via FMN and iron-sulfur (Fe-S) centers, to quinones in the respiratory chain. The immediate electron acceptor for the enzyme in this species is believed to be ubiquinone. Couples the redox reaction to proton translocation (for every two electrons transferred, four hydrogen ions are translocated across the cytoplasmic membrane), and thus conserves the redox energy in a proton gradient. This subunit may bind ubiquinone. The protein is NADH-quinone oxidoreductase subunit H of Nitrobacter hamburgensis (strain DSM 10229 / NCIMB 13809 / X14).